We begin with the raw amino-acid sequence, 281 residues long: INSIG family protein (281 aa).

Over 1-93 (MSRKEIYEPR…FIDYSSLITF (93 aa)) the chain is Cytoplasmic. Position 28 is a phosphoserine (Ser-28). A helical transmembrane segment spans residues 94 to 120 (FCKLCVIFGLGFVFTYLAEQIVQDAKL). The Lumenal segment spans residues 121–134 (PLLTVNLKSWKFEP). The helical transmembrane segment at 135–159 (PWPAIFGFVAVILGLSYRRMDTKYP) threads the bilayer. At 160 to 170 (LGAAPLRPSQS) the chain is on the cytoplasmic side. A helical transmembrane segment spans residues 171 to 186 (SKWQWISRYLAAFATL). The Lumenal segment spans residues 187-189 (LLS). A helical membrane pass occupies residues 190–215 (MKKLLFISNSHSIVALVASSASIWYI). Topologically, residues 216–221 (FDRSRN) are cytoplasmic. The helical transmembrane segment at 222-256 (GIILSTITSVLGSILYYNLVDTSKIELNGVEFPEI) threads the bilayer. Over 257 to 260 (QFRL) the chain is Lumenal. Residues 261–281 (WIPMILFSASTIVGNAGRLLF) traverse the membrane as a helical segment.

It belongs to the INSIG family.

The protein localises to the endoplasmic reticulum membrane. This is INSIG family protein (ins1) from Schizosaccharomyces pombe (strain 972 / ATCC 24843) (Fission yeast).